The sequence spans 1217 residues: DNA-directed RNA polymerase subunit beta' (1217 aa).

Zn(2+)-binding residues include C60, C62, C75, and C78. Residues D449, D451, and D453 each coordinate Mg(2+). Zn(2+) is bound by residues C821, C895, C902, and C905.

It belongs to the RNA polymerase beta' chain family. In terms of assembly, the RNAP catalytic core consists of 2 alpha, 1 beta, 1 beta' and 1 omega subunit. When a sigma factor is associated with the core the holoenzyme is formed, which can initiate transcription. Mg(2+) is required as a cofactor. Zn(2+) serves as cofactor.

The catalysed reaction is RNA(n) + a ribonucleoside 5'-triphosphate = RNA(n+1) + diphosphate. Its function is as follows. DNA-dependent RNA polymerase catalyzes the transcription of DNA into RNA using the four ribonucleoside triphosphates as substrates. In Lactobacillus helveticus (strain DPC 4571), this protein is DNA-directed RNA polymerase subunit beta'.